The following is a 161-amino-acid chain: Methylated-DNA--protein-cysteine methyltransferase (161 aa).

C128 functions as the Nucleophile; methyl group acceptor in the catalytic mechanism.

The protein belongs to the MGMT family.

It is found in the cytoplasm. The catalysed reaction is a 6-O-methyl-2'-deoxyguanosine in DNA + L-cysteinyl-[protein] = S-methyl-L-cysteinyl-[protein] + a 2'-deoxyguanosine in DNA. The enzyme catalyses a 4-O-methyl-thymidine in DNA + L-cysteinyl-[protein] = a thymidine in DNA + S-methyl-L-cysteinyl-[protein]. Functionally, involved in the cellular defense against the biological effects of O6-methylguanine (O6-MeG) and O4-methylthymine (O4-MeT) in DNA. Repairs the methylated nucleobase in DNA by stoichiometrically transferring the methyl group to a cysteine residue in the enzyme. This is a suicide reaction: the enzyme is irreversibly inactivated. This chain is Methylated-DNA--protein-cysteine methyltransferase, found in Methanocaldococcus vulcanius (strain ATCC 700851 / DSM 12094 / M7) (Methanococcus vulcanius).